A 474-amino-acid polypeptide reads, in one-letter code: Hepatocyte nuclear factor 4-alpha (474 aa).

A DNA-binding region (nuclear receptor) is located at residues 57 to 132 (SALCAICGDR…AGMKKEAVQN (76 aa)). 2 NR C4-type zinc fingers span residues 60–80 (CAIC…CDGC) and 96–120 (CRFS…LKKC). Ser-142 and Ser-143 each carry phosphoserine. Tyr-144 is subject to Phosphotyrosine. One can recognise an NR LBD domain in the interval 147 to 377 (SSLPSINALL…NLLQEMLLGG (231 aa)). Position 166 is a phosphothreonine (Thr-166). Ser-167 is modified (phosphoserine). Residues Lys-234 and Lys-307 each participate in a glycyl lysine isopeptide (Lys-Gly) (interchain with G-Cter in ubiquitin) cross-link. Phosphoserine; by AMPK is present on Ser-313. The 9aaTAD signature appears at 368–376 (NLLQEMLLG). A disordered region spans residues 419–447 (EWPRPRGQAATPETPQPSPPGGSGSEPYK). Thr-429 and Thr-432 each carry phosphothreonine. Ser-436 carries the phosphoserine modification. N6-acetyllysine is present on Lys-458.

It belongs to the nuclear hormone receptor family. NR2 subfamily. In terms of assembly, homodimerization is required for HNF4-alpha to bind to its recognition site. Interacts with CLOCK, BMAL1, CRY1, CRY2, PER1 and PER2. Interacts with NR0B2/SHP; the resulting heterodimer is transcriptionally inactive. Interacts with DDX3X; this interaction disrupts the interaction between HNF4 and NR0B2 that forms inactive heterodimers and enhances the formation of active HNF4 homodimers. Phosphorylated on tyrosine residue(s); phosphorylation is important for its DNA-binding activity. Phosphorylation may directly or indirectly play a regulatory role in the subnuclear distribution. Phosphorylation at Ser-313 by AMPK reduces the ability to form homodimers and bind DNA. Post-translationally, acetylation at Lys-458 lowers transcriptional activation by about two-fold.

The protein localises to the nucleus. Transcriptional regulator which controls the expression of hepatic genes during the transition of endodermal cells to hepatic progenitor cells, facilitating the recruitment of RNA pol II to the promoters of target genes. Activates the transcription of CYP2C38. Represses the CLOCK-BMAL1 transcriptional activity and is essential for circadian rhythm maintenance and period regulation in the liver and colon cells. The chain is Hepatocyte nuclear factor 4-alpha (HNF4A) from Homo sapiens (Human).